A 211-amino-acid polypeptide reads, in one-letter code: ATP phosphoribosyltransferase (211 aa).

The protein belongs to the ATP phosphoribosyltransferase family. Short subfamily. As to quaternary structure, heteromultimer composed of HisG and HisZ subunits.

The protein resides in the cytoplasm. The enzyme catalyses 1-(5-phospho-beta-D-ribosyl)-ATP + diphosphate = 5-phospho-alpha-D-ribose 1-diphosphate + ATP. Its pathway is amino-acid biosynthesis; L-histidine biosynthesis; L-histidine from 5-phospho-alpha-D-ribose 1-diphosphate: step 1/9. Catalyzes the condensation of ATP and 5-phosphoribose 1-diphosphate to form N'-(5'-phosphoribosyl)-ATP (PR-ATP). Has a crucial role in the pathway because the rate of histidine biosynthesis seems to be controlled primarily by regulation of HisG enzymatic activity. The sequence is that of ATP phosphoribosyltransferase from Sorangium cellulosum (strain So ce56) (Polyangium cellulosum (strain So ce56)).